Reading from the N-terminus, the 207-residue chain is Guanylate kinase (207 aa).

The Guanylate kinase-like domain occupies 4–184 (GTLYIVSAPS…ALADLHTIIR (181 aa)). 11-18 (APSGAGKS) contacts ATP.

The protein belongs to the guanylate kinase family.

It localises to the cytoplasm. The catalysed reaction is GMP + ATP = GDP + ADP. In terms of biological role, essential for recycling GMP and indirectly, cGMP. The chain is Guanylate kinase from Photorhabdus laumondii subsp. laumondii (strain DSM 15139 / CIP 105565 / TT01) (Photorhabdus luminescens subsp. laumondii).